Here is a 678-residue protein sequence, read N- to C-terminus: Translation initiation factor eIF2B subunit epsilon (678 aa).

Phosphothreonine is present on Thr-172. The disordered stretch occupies residues 467 to 489; the sequence is STNELHLSDSESSETSSSSEEDM. Ser-500 is modified (phosphoserine). Thr-503 is modified (phosphothreonine). Phosphoserine is present on Ser-506. Residues 508 to 674 enclose the W2 domain; the sequence is DFDEGDFNKE…NTAESESESE (167 aa).

The protein belongs to the eIF-2B gamma/epsilon subunits family. Component of the translation initiation factor 2B (eIF2B) complex which is a heterodecamer of two sets of five different subunits: alpha, beta, gamma, delta and epsilon. Subunits alpha, beta and delta comprise a regulatory subcomplex and subunits epsilon and gamma comprise a catalytic subcomplex. Within the complex, the hexameric regulatory complex resides at the center, with the two heterodimeric catalytic subcomplexes bound on opposite sides.

It localises to the cytoplasm. Its subcellular location is the cytosol. Its function is as follows. Acts as a component of the translation initiation factor 2B (eIF2B) complex, which catalyzes the exchange of GDP for GTP on the eukaryotic initiation factor 2 (eIF2) complex gamma subunit. Its guanine nucleotide exchange factor activity is repressed when bound to eIF2 complex phosphorylated on the alpha subunit, thereby limiting the amount of methionyl-initiator methionine tRNA available to the ribosome and consequently global translation is repressed. The protein is Translation initiation factor eIF2B subunit epsilon (tif225) of Schizosaccharomyces pombe (strain 972 / ATCC 24843) (Fission yeast).